Here is a 332-residue protein sequence, read N- to C-terminus: Ribosomal RNA small subunit methyltransferase H (332 aa).

S-adenosyl-L-methionine is bound by residues 42–44 (GGH), aspartate 62, phenylalanine 86, aspartate 105, and glutamine 112.

This sequence belongs to the methyltransferase superfamily. RsmH family.

It is found in the cytoplasm. It catalyses the reaction cytidine(1402) in 16S rRNA + S-adenosyl-L-methionine = N(4)-methylcytidine(1402) in 16S rRNA + S-adenosyl-L-homocysteine + H(+). Its function is as follows. Specifically methylates the N4 position of cytidine in position 1402 (C1402) of 16S rRNA. This is Ribosomal RNA small subunit methyltransferase H from Cupriavidus pinatubonensis (strain JMP 134 / LMG 1197) (Cupriavidus necator (strain JMP 134)).